A 373-amino-acid polypeptide reads, in one-letter code: Dual-specificity RNA methyltransferase RlmN (373 aa).

The active-site Proton acceptor is the E94. Residues E100 to D339 form the Radical SAM core domain. The cysteines at positions 107 and 344 are disulfide-linked. The [4Fe-4S] cluster site is built by C114, C118, and C121. Residues G168–E169, S200, S222–H224, and N301 each bind S-adenosyl-L-methionine. The active-site S-methylcysteine intermediate is C344.

It belongs to the radical SAM superfamily. RlmN family. Requires [4Fe-4S] cluster as cofactor.

The protein resides in the cytoplasm. The catalysed reaction is adenosine(2503) in 23S rRNA + 2 reduced [2Fe-2S]-[ferredoxin] + 2 S-adenosyl-L-methionine = 2-methyladenosine(2503) in 23S rRNA + 5'-deoxyadenosine + L-methionine + 2 oxidized [2Fe-2S]-[ferredoxin] + S-adenosyl-L-homocysteine. It carries out the reaction adenosine(37) in tRNA + 2 reduced [2Fe-2S]-[ferredoxin] + 2 S-adenosyl-L-methionine = 2-methyladenosine(37) in tRNA + 5'-deoxyadenosine + L-methionine + 2 oxidized [2Fe-2S]-[ferredoxin] + S-adenosyl-L-homocysteine. Specifically methylates position 2 of adenine 2503 in 23S rRNA and position 2 of adenine 37 in tRNAs. m2A2503 modification seems to play a crucial role in the proofreading step occurring at the peptidyl transferase center and thus would serve to optimize ribosomal fidelity. This Shewanella denitrificans (strain OS217 / ATCC BAA-1090 / DSM 15013) protein is Dual-specificity RNA methyltransferase RlmN.